The primary structure comprises 122 residues: Protein YqjC (122 aa).

The signal sequence occupies residues 1-20 (MKYRIALAVSLFALSAGSYA). Residues 65-100 (QLRADHQKKIAKQKDEVAERQQDLAEAKQKGDADKI) form a disordered region. Residues 66–100 (LRADHQKKIAKQKDEVAERQQDLAEAKQKGDADKI) are compositionally biased toward basic and acidic residues.

This chain is Protein YqjC (yqjC), found in Escherichia coli (strain K12).